Consider the following 768-residue polypeptide: Cullin-3 (768 aa).

N-acetylserine is present on S2. The interaction with KLHL18 stretch occupies residues 2 to 41; that stretch reads SNLSKGTGSRKDTKMRIRAFPMTMDEKYVNSIWDLLKNAI. S585 carries the phosphoserine modification. The segment at 677–698 is disordered; sequence VAAKQGESDPERKETRQKVDDD. Positions 682-698 are enriched in basic and acidic residues; it reads GESDPERKETRQKVDDD. In terms of domain architecture, Cullin neddylation spans 698-760; that stretch reads DRKHEIEAAI…REYLARTPED (63 aa). Residue K712 forms a Glycyl lysine isopeptide (Lys-Gly) (interchain with G-Cter in NEDD8) linkage.

It belongs to the cullin family. In terms of assembly, forms neddylation-dependent homodimers. Component of multiple BCR (BTB-CUL3-RBX1) E3 ubiquitin-protein ligase complexes formed of CUL3, RBX1 and a variable BTB domain-containing protein acting as both, adapter to cullin and substrate recognition subunit. The BCR complex may be active as a heterodimeric complex, in which NEDD8, covalently attached to one CUL3 molecule, binds to the C-terminus of a second CUL3 molecule. Interacts with RBX1, RNF7, CYCE and TIP120A/CAND1. Part of the BCR(SPOP) containing SPOP, and of BCR containing homodimeric SPOPL or the heterodimer formed by SPOP and SPOPL. Part of the probable BCR(KLHL9-KLHL13) complex with BTB domain proteins KLHL9 and KLHL13. Part of the BCR(KLHL41) complex containing KLHL41. Component of the BCR(KLHL12) E3 ubiquitin ligase complex, at least composed of CUL3 and KLHL12 and RBX1. Component of the BCR(KLHL3) E3 ubiquitin ligase complex, at least composed of CUL3 and KLHL3 and RBX1. Part of the BCR(ENC1) complex containing ENC1. Part of a complex consisting of BMI1/PCGF4, CUL3 and SPOP. Part of a complex consisting of BRMS1, CUL3 and SPOP. Component of the BCR(KLHL21) E3 ubiquitin ligase complex, at least composed of CUL3, KLHL21 and RBX1. Component of the BCR(KLHL22) E3 ubiquitin ligase complex, at least composed of CUL3, KLHL22 and RBX1. Component of the BCR(KLHL25) E3 ubiquitin ligase complex, at least composed of CUL3, KLHL25 and RBX1. Part of a complex consisting of MACROH2A1, CUL3 and SPOP. Component of the BCR(KLHL42) E3 ubiquitin ligase complex, at least composed of CUL3 and KLHL42. Interacts with KLHL42 (via the BTB domain). Interacts with KATNA1; the interaction is enhanced by KLHL42. Component of the BCR(KBTBD8) E3 ubiquitin ligase complex, at least composed of CUL3, KBTBD8 and RBX1. Interacts with KCTD5, KLHL9, KLHL11, KLHL13, GAN, ZBTB16, KLHL3, KLHL15, KLHL20, KLHL36, GMCL2, BTBD1. Part of a complex that contains CUL3, RBX1 and GAN. Interacts (via BTB domain) with KLHL17; the interaction regulates surface GRIK2 expression. Interacts with KCTD7. Part of the BCR(GAN) complex containing GAN. Part of the BCR(KEAP1) complex containing KEAP1. Interacts with KLHL10. Interacts with KAT5 and ATF2. Interacts with KCTD17 in the BCR(KCTD17) E3 ubiquitin ligase complex, at least composed of CUL3, KCTD17 and RBX1. Interacts (when neddylated) with ARIH1; leading to activate the E3 ligase activity of ARIH1. Interacts with COPS9 isoform 2. Interacts with PPP2R5B; this interaction is indirect and mediated through KLHL15-binding and leads to PPP2R5B proteasomal degradation. Interacts with RBBP8/CtIP; this interaction is indirect and mediated through KLHL15-binding and leads to RBBP8 proteasomal degradation. Interacts with KLHL24 in the BCR(KLHL24) E3 ubiquitin ligase complex, composed of CUL3, RBX1 and KLHL24. Interacts with RHOBTB2. Interacts with AURKA and KLHL18 (via BTB domain). Interacts (unneddylated form) with DCUN1D1, DCUN1D2, DCUN1D3, DCUN1D4 and DCUN1D5; these interactions promote the cullin neddylation. Component of a BCR3 (BTB-CUL3-RBX1) E3 ubiquitin ligase complex, also named Cul3-RING ubiquitin ligase complex CUL3(KBTBD6/7), composed of CUL3, RBX1, KBTBD6 and KBTBD7. Component of the BCR(KBTBD2) E3 ubiquitin ligase complex, at least composed of CUL3, KBTBD2 and RBX1. Interacts with KBTBD2 (via the BTB domain). Component of the BCR(KBTBD4) E3 ubiquitin ligase complex, at least composed of CUL3, KBTBD4 and RBX1. Component of the BCR(ARMC5) E3 ubiquitin ligase complex, composed of CUL3, ARMC5 and RBX1. Neddylated. Attachment of NEDD8 is required for the E3 ubiquitin-protein ligase activity of the BCR complex. Deneddylated via its interaction with the COP9 signalosome (CSN) complex. In terms of tissue distribution, brain, spermatozoa, and testis (at protein level). Widely expressed.

The protein resides in the nucleus. Its subcellular location is the golgi apparatus. It is found in the cell projection. The protein localises to the cilium. It localises to the flagellum. The protein resides in the cytoplasm. Its subcellular location is the cytoskeleton. It is found in the spindle. The protein localises to the microtubule organizing center. It localises to the centrosome. The protein resides in the spindle pole. It participates in protein modification; protein ubiquitination. In terms of biological role, core component of multiple cullin-RING-based BCR (BTB-CUL3-RBX1) E3 ubiquitin-protein ligase complexes which mediate the ubiquitination and subsequent proteasomal degradation of target proteins. BCR complexes and ARIH1 collaborate in tandem to mediate ubiquitination of target proteins. As a scaffold protein may contribute to catalysis through positioning of the substrate and the ubiquitin-conjugating enzyme. The E3 ubiquitin-protein ligase activity of the complex is dependent on the neddylation of the cullin subunit and is inhibited by the association of the deneddylated cullin subunit with TIP120A/CAND1. The functional specificity of the BCR complex depends on the BTB domain-containing protein as the substrate recognition component. BCR(KLHL42) is involved in ubiquitination of KATNA1. BCR(SPOP) is involved in ubiquitination of BMI1/PCGF4, BRMS1, MACROH2A1 and DAXX, GLI2 and GLI3. Can also form a cullin-RING-based BCR (BTB-CUL3-RBX1) E3 ubiquitin-protein ligase complex containing homodimeric SPOPL or the heterodimer formed by SPOP and SPOPL; these complexes have lower ubiquitin ligase activity. BCR(KLHL9-KLHL13) controls the dynamic behavior of AURKB on mitotic chromosomes and thereby coordinates faithful mitotic progression and completion of cytokinesis. BCR(KLHL12) is involved in ER-Golgi transport by regulating the size of COPII coats, thereby playing a key role in collagen export, which is required for embryonic stem (ES) cells division: BCR(KLHL12) acts by mediating monoubiquitination of SEC31 (SEC31A or SEC31B). BCR(KLHL3) acts as a regulator of ion transport in the distal nephron; by mediating ubiquitination of WNK4. The BCR(KLHL20) E3 ubiquitin ligase complex is involved in interferon response and anterograde Golgi to endosome transport: it mediates both ubiquitination leading to degradation and 'Lys-33'-linked ubiquitination. The BCR(KLHL21) E3 ubiquitin ligase complex regulates localization of the chromosomal passenger complex (CPC) from chromosomes to the spindle midzone in anaphase and mediates the ubiquitination of AURKB. The BCR(KLHL22) ubiquitin ligase complex mediates monoubiquitination of PLK1, leading to PLK1 dissociation from phosphoreceptor proteins and subsequent removal from kinetochores, allowing silencing of the spindle assembly checkpoint (SAC) and chromosome segregation. The BCR(KLHL22) ubiquitin ligase complex is also responsible for the amino acid-stimulated 'Lys-48' polyubiquitination and proteasomal degradation of DEPDC5. Through the degradation of DEPDC5, releases the GATOR1 complex-mediated inhibition of the TORC1 pathway. The BCR(KLHL25) ubiquitin ligase complex is involved in translational homeostasis by mediating ubiquitination and subsequent degradation of hypophosphorylated EIF4EBP1 (4E-BP1). The BCR(KLHL25) ubiquitin ligase complex is also involved in lipid synthesis by mediating ubiquitination and degradation of ACLY. The BCR(KBTBD8) complex acts by mediating monoubiquitination of NOLC1 and TCOF1, leading to remodel the translational program of differentiating cells in favor of neural crest specification. Involved in ubiquitination of cyclin E and of cyclin D1 (in vitro) thus involved in regulation of G1/S transition. Involved in the ubiquitination of KEAP1, ENC1 and KLHL41. In concert with ATF2 and RBX1, promotes degradation of KAT5 thereby attenuating its ability to acetylate and activate ATM. The BCR(KCTD17) E3 ubiquitin ligase complex mediates ubiquitination and degradation of TCHP, a down-regulator of cilium assembly, thereby inducing ciliogenesis. The BCR(KLHL24) E3 ubiquitin ligase complex mediates ubiquitination of KRT14, controls KRT14 levels during keratinocytes differentiation, and is essential for skin integrity. The BCR(KLHL18) E3 ubiquitin ligase complex mediates the ubiquitination of AURKA leading to its activation at the centrosome which is required for initiating mitotic entry. The BCR(KEAP1) E3 ubiquitin ligase complex acts as a key sensor of oxidative and electrophilic stress by mediating ubiquitination and degradation of NFE2L2/NRF2, a transcription factor regulating expression of many cytoprotective genes. As part of the CUL3(KBTBD6/7) E3 ubiquitin ligase complex functions mediates 'Lys-48' ubiquitination and proteasomal degradation of TIAM1. By controlling the ubiquitination of that RAC1 guanine exchange factors (GEF), regulates RAC1 signal transduction and downstream biological processes including the organization of the cytoskeleton, cell migration and cell proliferation. The BCR(KBTBD4) E3 ubiquitin ligase complex targets CoREST corepressor complex components RCOR1, KDM1A/LSD1 and HDAC2 for proteasomal degradation with RCOR1 likely to be the primary target while degradation of KDM1A and HDAC2 is likely due to their association with RCOR1. It also targets RCOR3, MIER2 and MIER3 for proteasomal degradation as well as associated proteins ZNF217 and RREB1 with degradation being dependent on the presence of an ELM2 domain in the target proteins. The BCR(ARMC5) complex mediates premature transcription termination of transcripts that are unfavorably configured for transcriptional elongation by mediating ubiquitination of Pol II subunit POLR2A. Required for 'Lys-63'-linked ubiquitination of large ribosomal subunit protein MRPL12. The polypeptide is Cullin-3 (Homo sapiens (Human)).